The chain runs to 1037 residues: Multidrug resistance protein MdtF (1037 aa).

Residues 1–9 are Cytoplasmic-facing; that stretch reads MANYFIDRP. The chain crosses the membrane as a helical span at residues 10–28; it reads VFAWVLAIIMMLAGGLAIM. Over 29 to 339 the chain is Periplasmic; the sequence is NLPVAQYPQI…TPFIEISIQE (311 aa). Residues 340 to 359 form a helical membrane-spanning segment; sequence VFKTLVEAIILVFLVMYLFL. Topologically, residues 360–365 are cytoplasmic; the sequence is QNFRAT. A helical membrane pass occupies residues 366 to 385; the sequence is IIPTIAVPVVILGTFAILSA. The Periplasmic segment spans residues 386 to 391; it reads VGFTIN. A helical membrane pass occupies residues 392–413; that stretch reads TLTMFGMVLAIGLLVDDAIVVV. The Cytoplasmic segment spans residues 414–441; that stretch reads ENVERVIAEDKLPPKEATHKSMGQIQRA. A helical membrane pass occupies residues 442-460; that stretch reads LVGIAVVLSAVFMPMAFMS. The Periplasmic portion of the chain corresponds to 461–473; that stretch reads GATGEIYRQFSIT. The helical transmembrane segment at 474 to 496 threads the bilayer; the sequence is LISSMLLSVFVAMSLTPALCATI. Over 497–536 the chain is Cytoplasmic; it reads LKAAPEGGHKPNALFARFNTLFEKSTQHYTDSTRSLLRCT. A helical transmembrane segment spans residues 537-555; that stretch reads GRYMVVYLLICAGMAVLFL. Over 556–870 the chain is Periplasmic; it reads RTPTSFLPEE…SYQEALSSNQ (315 aa). A helical transmembrane segment spans residues 871–890; it reads APALYAISLVVVFLALAALY. The Cytoplasmic segment spans residues 891–896; that stretch reads ESWSIP. Residues 897-916 form a helical membrane-spanning segment; that stretch reads FSVMLVVPLGVVGALLATDL. Topologically, residues 917–922 are periplasmic; that stretch reads RGLSND. The chain crosses the membrane as a helical span at residues 923–944; that stretch reads VYFQVGLLTTIGLSAKNAILIV. The Cytoplasmic segment spans residues 945–972; sequence EFAVEMMQKEGKTPIEAIIEAARMRLRP. A helical membrane pass occupies residues 973 to 991; that stretch reads ILMTSLAFILGVLPLVISH. At 992–1004 the chain is on the periplasmic side; sequence GAGSGAQNAVGTG. A helical transmembrane segment spans residues 1005–1027; that stretch reads VMGGMFAATVLAIYFVPVFFVVV. Residues 1028–1037 are Cytoplasmic-facing; it reads EHLFARFKKA.

It belongs to the resistance-nodulation-cell division (RND) (TC 2.A.6) family. As to quaternary structure, homotrimer. Part of the tripartite efflux system MdtEF-TolC, which is composed of an inner membrane transporter, MdtF, a membrane fusion protein, MdtE, and an outer membrane component, TolC. The complex forms a large protein conduit and can translocate molecules across both the inner and outer membranes.

The protein resides in the cell inner membrane. Functionally, part of the tripartite efflux system MdtEF-TolC, which confers resistance to compounds such as rhodamine 6G, erythromycin, doxorubicin, ethidium bromide, TPP, SDS, deoxycholate, crystal violet and benzalkonium. This chain is Multidrug resistance protein MdtF (mdtF), found in Escherichia coli (strain K12).